We begin with the raw amino-acid sequence, 533 residues long: Purine-cytosine permease FCY2 (533 aa).

Residues 1-98 (MLEEGNNVYE…NAASMWFSAN (98 aa)) are Cytoplasmic-facing. Lys16 is covalently cross-linked (Glycyl lysine isopeptide (Lys-Gly) (interchain with G-Cter in ubiquitin)). Ser18 carries the post-translational modification Phosphoserine. The helical transmembrane segment at 99 to 119 (MVIASYALGALGPMVFGLNFG) threads the bilayer. At 120 to 121 (QS) the chain is on the extracellular side. A helical membrane pass occupies residues 122–141 (VLVIIFFNIMGLIFVAFFSV). The Cytoplasmic segment spans residues 142 to 198 (FGAELGLRQMILSRYLVGNVTARIFSLINVIACVGWGIVNTSVSAQLLNMVNEGSGH). Positions 165–184 (IFSLINVIACVGWGIVNTSV) are surface seeking. The helical transmembrane segment at 199-218 (VCPIWAGCLIIIGGTVLVTF) threads the bilayer. Residues 219–256 (FGYSVIHAYEKWSWVPNFAVFLVIIAQLSRSGKFKGGE) are Extracellular-facing. Residues 257 to 276 (WVGGATTAGSVLSFGSSIFG) form a helical membrane-spanning segment. Over 277–300 (FAAGWTTYAADYTVYMPKSTNKYK) the chain is Cytoplasmic. Residues 301 to 320 (IFFSLVAGLAFPLFFTMILG) form a helical membrane-spanning segment. Over 321–347 (AASAMAALNDPTWKAYYDKNAMGGVIY) the chain is Extracellular. The chain crosses the membrane as a helical span at residues 348-367 (AILVPNSLNGFGQFCCVLLA). Residues 368–398 (LSTIANNIPNMYTVALSAQALWAPLAKIPRV) are Cytoplasmic-facing. A helical membrane pass occupies residues 399 to 418 (VWTMAGNAATLGISIPATYY). Over 419–465 (FDGFMENFMDSIGYYLAIYIAISCSEHFFYRRSFSAYNIDDWDNWEH) the chain is Extracellular. Residues 466–485 (LPIGIAGTAALIVGAFGVAL) traverse the membrane as a helical segment. Residues 486 to 533 (GMCQTYWVGEIGRLIGKYGGDIGFELGASWAFIIYNILRPLELKYFGR) lie on the Cytoplasmic side of the membrane.

The protein belongs to the purine-cytosine permease (2.A.39) family. Post-translationally, not N-glycosylated.

It is found in the membrane. Functionally, this permease has a broad specificity towards purines, and also transport cytosine and 5-methylcytosine but neither uracil nor thymine. In Saccharomyces cerevisiae (strain ATCC 204508 / S288c) (Baker's yeast), this protein is Purine-cytosine permease FCY2 (FCY2).